A 470-amino-acid polypeptide reads, in one-letter code: UDP-N-acetylmuramoylalanine--D-glutamate ligase (470 aa).

Residue 124-130 (GTNGKTT) participates in ATP binding.

Belongs to the MurCDEF family.

It is found in the cytoplasm. It catalyses the reaction UDP-N-acetyl-alpha-D-muramoyl-L-alanine + D-glutamate + ATP = UDP-N-acetyl-alpha-D-muramoyl-L-alanyl-D-glutamate + ADP + phosphate + H(+). The protein operates within cell wall biogenesis; peptidoglycan biosynthesis. Cell wall formation. Catalyzes the addition of glutamate to the nucleotide precursor UDP-N-acetylmuramoyl-L-alanine (UMA). This is UDP-N-acetylmuramoylalanine--D-glutamate ligase from Prochlorococcus marinus (strain SARG / CCMP1375 / SS120).